The chain runs to 38 residues: MTQPNPNKQSVELNRTSLYWGLLLIFVLAVLFSNYFFN.

The helical transmembrane segment at 17–37 (SLYWGLLLIFVLAVLFSNYFF) threads the bilayer.

It belongs to the PsbL family. As to quaternary structure, PSII is composed of 1 copy each of membrane proteins PsbA, PsbB, PsbC, PsbD, PsbE, PsbF, PsbH, PsbI, PsbJ, PsbK, PsbL, PsbM, PsbT, PsbX, PsbY, PsbZ, Psb30/Ycf12, at least 3 peripheral proteins of the oxygen-evolving complex and a large number of cofactors. It forms dimeric complexes.

It is found in the plastid. The protein resides in the chloroplast thylakoid membrane. One of the components of the core complex of photosystem II (PSII). PSII is a light-driven water:plastoquinone oxidoreductase that uses light energy to abstract electrons from H(2)O, generating O(2) and a proton gradient subsequently used for ATP formation. It consists of a core antenna complex that captures photons, and an electron transfer chain that converts photonic excitation into a charge separation. This subunit is found at the monomer-monomer interface and is required for correct PSII assembly and/or dimerization. This is Photosystem II reaction center protein L from Psilotum nudum (Whisk fern).